A 490-amino-acid chain; its full sequence is Tryptophan 5-hydroxylase 2 (490 aa).

S19 bears the Phosphoserine mark. Residues 31–42 (LGSSTLNKPNSG) show a composition bias toward polar residues. The segment at 31–58 (LGSSTLNKPNSGKNDDKGNKGSSKREAA) is disordered. Basic and acidic residues predominate over residues 43 to 58 (KNDDKGNKGSSKREAA). The region spanning 65-140 (AVVFSLKNEV…TIVTLNPPEN (76 aa)) is the ACT domain. Fe cation is bound by residues H318, H323, and E363.

It belongs to the biopterin-dependent aromatic amino acid hydroxylase family. As to quaternary structure, interacts with DNAJC12. Fe(2+) is required as a cofactor. In terms of tissue distribution, brain specific.

It carries out the reaction (6R)-L-erythro-5,6,7,8-tetrahydrobiopterin + L-tryptophan + O2 = 5-hydroxy-L-tryptophan + (4aS,6R)-4a-hydroxy-L-erythro-5,6,7,8-tetrahydrobiopterin. The protein operates within aromatic compound metabolism; serotonin biosynthesis; serotonin from L-tryptophan: step 1/2. This Homo sapiens (Human) protein is Tryptophan 5-hydroxylase 2 (TPH2).